The following is a 228-amino-acid chain: UPF0758 protein MW1604 (228 aa).

The region spanning 102–224 (KITQPSDVAD…FTSLVEAGYF (123 aa)) is the MPN domain. Histidine 173, histidine 175, and aspartate 186 together coordinate Zn(2+). A JAMM motif motif is present at residues 173–186 (HNHPSGDVTPSQED).

The protein belongs to the UPF0758 family.

The protein is UPF0758 protein MW1604 of Staphylococcus aureus (strain MW2).